We begin with the raw amino-acid sequence, 448 residues long: Putative F-box/LRR-repeat protein At3g44810 (448 aa).

An F-box domain is found at 6–54 (TASLNCLPDELLVHVLSSLETKQAASTSVLSKRWRTLFAVRRNLDFDDS). LRR repeat units follow at residues 117-141 (VSELHLCLTSVTRRLHRFPSNVFRS), 143-165 (TLVKLTLGTNLFIVYFPSDTCLP), 190-213 (CPALEDLTIDQKSFPGLPNVVSSK), 228-251 (FDWFRTVALDTPNLVTLLYSTYAR), 290-313 (VRNVQMLHLTSSATEVISQCCKGG), and 421-443 (IVDSKKVQLTEDLMKLPSASSRL).

The protein is Putative F-box/LRR-repeat protein At3g44810 of Arabidopsis thaliana (Mouse-ear cress).